A 357-amino-acid chain; its full sequence is Peptide chain release factor 1 (357 aa).

The residue at position 233 (Gln233) is an N5-methylglutamine.

Belongs to the prokaryotic/mitochondrial release factor family. Methylated by PrmC. Methylation increases the termination efficiency of RF1.

The protein localises to the cytoplasm. Peptide chain release factor 1 directs the termination of translation in response to the peptide chain termination codons UAG and UAA. The sequence is that of Peptide chain release factor 1 from Syntrophus aciditrophicus (strain SB).